Reading from the N-terminus, the 570-residue chain is Probable metalloreductase AIM14 (570 aa).

The next 7 helical transmembrane spans lie at 21-41, 70-90, 101-118, 142-162, 177-197, 204-224, and 230-250; these read IKYG…LALL, AIHL…HYSL, LGRL…LTLR, IITV…AIDD, FVGF…IGPM, LFYI…PIHS, and FPFL…RIVF. Residues 101–219 form the Ferric oxidoreductase domain; that stretch reads LGRLSYALIP…NLVNVAFILL (119 aa). An FAD-binding FR-type domain is found at 250–388; sequence FAKSLMILNK…GGSGISFALP (139 aa). Positions 480-507 are disordered; sequence ISNFNSENADSNDKTPETSHSPTKENGS.

Belongs to the ferric reductase (FRE) family. AIM14 subfamily. In terms of assembly, interacts with ribosomes.

It localises to the membrane. In terms of biological role, probable cell surface metalloreductase. May be involved in iron or copper homeostasis. In Saccharomyces cerevisiae (strain JAY291) (Baker's yeast), this protein is Probable metalloreductase AIM14 (AIM14).